The chain runs to 235 residues: Golgi to ER traffic protein 1 (235 aa).

A topological domain (lumenal) is located at residue methionine 1. Residues 2 to 21 (HWAAAVAIFFIVVTKFLQYT) traverse the membrane as a helical segment. Residues 22-104 (NKYHEKWISK…AFQAHLHKLR (83 aa)) lie on the Cytoplasmic side of the membrane. A coiled-coil region spans residues 68–104 (WTKNNRKLDSLDKEINNLKDEIQSENKAFQAHLHKLR). Residues 105 to 125 (LLALTVPFFVFKIMYGKTPVY) traverse the membrane as a helical segment. Topologically, residues 126 to 181 (KLSSSTSTLFPTFVSGVWSQGWLYVLLHPLRTISQKWHIMEGKFGASKFDDMALQS) are lumenal. The chain crosses the membrane as a helical span at residues 182–198 (VSLGIWVWALMNVINGV). Residues 199–235 (EFIVKQLFLTPKMEAPASVETQEEKALDAVDDAIILD) lie on the Cytoplasmic side of the membrane.

It belongs to the WRB/GET1 family. As to quaternary structure, component of the Golgi to ER traffic (GET) complex, which is composed of GET1, GET2 and GET3. Within the complex, GET1 and GET2 form a heterotetramer which is stabilized by phosphatidylinositol binding and which binds to the GET3 homodimer.

It localises to the endoplasmic reticulum membrane. The protein resides in the golgi apparatus membrane. Functionally, required for the post-translational delivery of tail-anchored (TA) proteins to the endoplasmic reticulum. Together with GET2, acts as a membrane receptor for soluble GET3, which recognizes and selectively binds the transmembrane domain of TA proteins in the cytosol. The GET complex cooperates with the HDEL receptor ERD2 to mediate the ATP-dependent retrieval of resident ER proteins that contain a C-terminal H-D-E-L retention signal from the Golgi to the ER. The sequence is that of Golgi to ER traffic protein 1 from Saccharomyces cerevisiae (strain RM11-1a) (Baker's yeast).